The following is a 339-amino-acid chain: Phenylalanine--tRNA ligase alpha subunit (339 aa).

Glutamate 254 serves as a coordination point for Mg(2+).

This sequence belongs to the class-II aminoacyl-tRNA synthetase family. Phe-tRNA synthetase alpha subunit type 1 subfamily. Tetramer of two alpha and two beta subunits. The cofactor is Mg(2+).

Its subcellular location is the cytoplasm. The enzyme catalyses tRNA(Phe) + L-phenylalanine + ATP = L-phenylalanyl-tRNA(Phe) + AMP + diphosphate + H(+). The chain is Phenylalanine--tRNA ligase alpha subunit from Clostridium botulinum (strain Langeland / NCTC 10281 / Type F).